Reading from the N-terminus, the 1012-residue chain is ATP-dependent DNA helicase MPH1 (1012 aa).

The region spanning 94 to 261 (IVQKSLYQNT…EVVNNLNISN (168 aa)) is the Helicase ATP-binding domain. Position 107–114 (107–114 (IPTGMGKT)) interacts with ATP. The short motif at 209 to 212 (DEAH) is the DEAH box element. The Helicase C-terminal domain occupies 430–654 (KLQKIINELS…NFVEYKKSDR (225 aa)). A disordered region spans residues 493-555 (DEGFIRKNKP…AQISGMNQKQ (63 aa)). Residues 498-510 (RKNKPKGRKKADR) are compositionally biased toward basic residues. Residues 511-537 (LKRLEEDKQKQLSKAKQKEQEKVERSS) are compositionally biased toward basic and acidic residues.

The protein belongs to the DEAD box helicase family. DEAH subfamily. FANCM sub-subfamily. Interacts with the MHF histone-fold complex to form the FANCM-MHF complex.

It localises to the nucleus. The enzyme catalyses ATP + H2O = ADP + phosphate + H(+). ATP-dependent DNA helicase involved in DNA damage repair by homologous recombination and in genome maintenance. Capable of unwinding D-loops. Plays a role in limiting crossover recombinants during mitotic DNA double-strand break (DSB) repair. Component of a FANCM-MHF complex which promotes gene conversion at blocked replication forks, probably by reversal of the stalled fork. The polypeptide is ATP-dependent DNA helicase MPH1 (Vanderwaltozyma polyspora (strain ATCC 22028 / DSM 70294 / BCRC 21397 / CBS 2163 / NBRC 10782 / NRRL Y-8283 / UCD 57-17) (Kluyveromyces polysporus)).